Consider the following 581-residue polypeptide: Invertase (581 aa).

The first 22 residues, 1-22, serve as a signal peptide directing secretion; sequence MFLKYILASGICLVSLLSSTNA. N-linked (GlcNAc...) asparagine glycans are attached at residues asparagine 37, asparagine 40, asparagine 46, asparagine 57, asparagine 62, and asparagine 79. Substrate-binding positions include 94–97, glutamine 113, and 158–159; these read FMND and FS. Aspartate 97 is an active-site residue. N-linked (GlcNAc...) asparagine glycans are attached at residues asparagine 168 and asparagine 175. Substrate is bound by residues 227–228 and glutamate 280; that span reads RD. Residue asparagine 322 is glycosylated (N-linked (GlcNAc...) asparagine). Tryptophan 366 is a binding site for substrate. N-linked (GlcNAc...) asparagine glycosylation is found at asparagine 399, asparagine 409, asparagine 425, asparagine 446, asparagine 452, asparagine 519, and asparagine 569.

The protein belongs to the glycosyl hydrolase 32 family. Glycosylated; contains 67% carbohydrates. This is composed of equimolar amounts of mannose and galactose. There is also a small amount of glucosamine present.

The catalysed reaction is Hydrolysis of terminal non-reducing beta-D-fructofuranoside residues in beta-D-fructofuranosides.. This chain is Invertase (inv1), found in Schizosaccharomyces pombe (strain 972 / ATCC 24843) (Fission yeast).